Consider the following 493-residue polypeptide: MAVIDQDNFSNISWHSEQNAESAASTAQVHHESNSSPEYARSGPDDGRPGDNAAGMEHDELDHSGGEILDCTVSDPHKENDGTKDAYVSYLITTNTTFPSFQKPKTTVRRRFTDFVFLYKVLCRDYQACAVPPLPDKQRMEYVRGDRFGTDFTARRAYSLQRFLARLALHPILRKADILHAFLESPDWNATMRSRSVRGSLASPGGIGDSTLGGSAAAGGGGGVFDTFADSFMNAFTKVHKPDRRFIEIKEKSDKLDEDLNHIEKVVARVARREADIESDLKDLAEQFQKLITLEPGVETAVRAFAASVEDTASGLKKLKDHTDQDYLGSLRDMVAYSGTLKNLLKAREQKQLDYEQLTEYLNKSRTDRDMLASGQSYGAGSALMSGAGGFIRSKIEDVRGVDHEQARRDRQRKLELRIEELTREVEVARNESESFAEQVSREVESFDWIKRVEFKRQFSGLADAHIEFYGDVMSVWEQYVMEMEKEGVVLPA.

The segment at 1 to 77 (MAVIDQDNFS…ILDCTVSDPH (77 aa)) is disordered. Residues 7-28 (DNFSNISWHSEQNAESAASTAQ) show a composition bias toward polar residues. Residues 56-65 (MEHDELDHSG) show a composition bias toward basic and acidic residues. In terms of domain architecture, PX spans 68-190 (ILDCTVSDPH…AFLESPDWNA (123 aa)). The a 1,2-diacyl-sn-glycero-3-phospho-(1D-myo-inositol-3-phosphate) site is built by Arg-111, Thr-113, Lys-137, and Arg-156. Coiled-coil stretches lie at residues 248–292 (EIKE…QKLI), 338–363 (SGTL…EYLN), and 405–442 (EQAR…QVSR).

This sequence belongs to the sorting nexin family.

The protein resides in the cytoplasm. It localises to the membrane. It is found in the endosome membrane. In terms of biological role, sorting nexin, involved in the separation or division of vacuoles throughout the entire life cycle of the cells. Involved in retrieval of late-Golgi SNAREs from post-Golgi endosomes to the trans-Golgi network, for cytoplasm to vacuole transport (Cvt), and autophagy of large cargos including mitophagy, pexophagy and glycophagy. In Neurospora crassa (strain ATCC 24698 / 74-OR23-1A / CBS 708.71 / DSM 1257 / FGSC 987), this protein is Sorting nexin-4 (vsp-5).